A 277-amino-acid polypeptide reads, in one-letter code: 2,3,4,5-tetrahydropyridine-2,6-dicarboxylate N-succinyltransferase (277 aa).

Residues R106 and D143 each coordinate substrate.

This sequence belongs to the transferase hexapeptide repeat family. Homotrimer.

Its subcellular location is the cytoplasm. It catalyses the reaction (S)-2,3,4,5-tetrahydrodipicolinate + succinyl-CoA + H2O = (S)-2-succinylamino-6-oxoheptanedioate + CoA. It functions in the pathway amino-acid biosynthesis; L-lysine biosynthesis via DAP pathway; LL-2,6-diaminopimelate from (S)-tetrahydrodipicolinate (succinylase route): step 1/3. This is 2,3,4,5-tetrahydropyridine-2,6-dicarboxylate N-succinyltransferase from Xylella fastidiosa (strain 9a5c).